The chain runs to 725 residues: Eukaryotic translation initiation factor 3 subunit B (725 aa).

The RRM domain occupies Asn46–Asp130. WD repeat units lie at residues Arg202–Arg240, Ala242–Ile280, Val354–Arg395, Pro462–Lys504, Asp510–Thr552, and Val554–Gln594.

It belongs to the eIF-3 subunit B family. As to quaternary structure, component of the eukaryotic translation initiation factor 3 (eIF-3) complex.

It localises to the cytoplasm. RNA-binding component of the eukaryotic translation initiation factor 3 (eIF-3) complex, which is involved in protein synthesis of a specialized repertoire of mRNAs and, together with other initiation factors, stimulates binding of mRNA and methionyl-tRNAi to the 40S ribosome. The eIF-3 complex specifically targets and initiates translation of a subset of mRNAs involved in cell proliferation. The chain is Eukaryotic translation initiation factor 3 subunit B from Caenorhabditis elegans.